A 436-amino-acid polypeptide reads, in one-letter code: Mitochondrial distribution and morphology protein 12 (436 aa).

In terms of domain architecture, SMP-LTD spans Met1–Ile436. Over residues Asp73–Glu84 the composition is skewed to acidic residues. Disordered regions lie at residues Asp73 to Thr98, Ala184 to Glu275, and Gly352 to Lys380. Residues Glu85–Thr98 are compositionally biased toward basic and acidic residues. Composition is skewed to polar residues over residues Pro190–Lys206 and Asp222–Ser243. The span at Ser244–Asp255 shows a compositional bias: basic and acidic residues. Residues Pro256–Asn267 show a composition bias toward polar residues.

The protein belongs to the MDM12 family. Component of the ER-mitochondria encounter structure (ERMES) or MDM complex, composed of mmm1, mdm10, mdm12 and mdm34. A mmm1 homodimer associates with one molecule of mdm12 on each side in a pairwise head-to-tail manner, and the SMP-LTD domains of mmm1 and mdm12 generate a continuous hydrophobic tunnel for phospholipid trafficking.

The protein resides in the mitochondrion outer membrane. It localises to the endoplasmic reticulum membrane. In terms of biological role, component of the ERMES/MDM complex, which serves as a molecular tether to connect the endoplasmic reticulum (ER) and mitochondria. Components of this complex are involved in the control of mitochondrial shape and protein biogenesis, and function in nonvesicular lipid trafficking between the ER and mitochondria. Mdm12 is required for the interaction of the ER-resident membrane protein mmm1 and the outer mitochondrial membrane-resident beta-barrel protein mdm10. The mdm12-mmm1 subcomplex functions in the major beta-barrel assembly pathway that is responsible for biogenesis of all mitochondrial outer membrane beta-barrel proteins, and acts in a late step after the SAM complex. The mdm10-mdm12-mmm1 subcomplex further acts in the TOM40-specific pathway after the action of the mdm12-mmm1 complex. Essential for establishing and maintaining the structure of mitochondria and maintenance of mtDNA nucleoids. The protein is Mitochondrial distribution and morphology protein 12 of Emericella nidulans (strain FGSC A4 / ATCC 38163 / CBS 112.46 / NRRL 194 / M139) (Aspergillus nidulans).